A 95-amino-acid polypeptide reads, in one-letter code: Large ribosomal subunit protein uL23 (95 aa).

Belongs to the universal ribosomal protein uL23 family. As to quaternary structure, part of the 50S ribosomal subunit. Contacts protein L29, and trigger factor when it is bound to the ribosome.

One of the early assembly proteins it binds 23S rRNA. One of the proteins that surrounds the polypeptide exit tunnel on the outside of the ribosome. Forms the main docking site for trigger factor binding to the ribosome. This Desulfitobacterium hafniense (strain Y51) protein is Large ribosomal subunit protein uL23.